An 89-amino-acid chain; its full sequence is Small ribosomal subunit protein uS15 (89 aa).

This sequence belongs to the universal ribosomal protein uS15 family. As to quaternary structure, part of the 30S ribosomal subunit. Forms a bridge to the 50S subunit in the 70S ribosome, contacting the 23S rRNA.

In terms of biological role, one of the primary rRNA binding proteins, it binds directly to 16S rRNA where it helps nucleate assembly of the platform of the 30S subunit by binding and bridging several RNA helices of the 16S rRNA. Forms an intersubunit bridge (bridge B4) with the 23S rRNA of the 50S subunit in the ribosome. The sequence is that of Small ribosomal subunit protein uS15 from Pseudomonas fluorescens (strain Pf0-1).